Consider the following 691-residue polypeptide: Protein-glutamine gamma-glutamyltransferase E (691 aa).

Tyr110 carries the post-translational modification Phosphotyrosine. A Phosphothreonine modification is found at Thr111. Ala221, Asn224, Asn226, and Asp227 together coordinate Ca(2+). Cys272 is an active-site residue. Ca(2+)-binding residues include Asp301, Asp303, Asn305, Ser307, and Asp324. Catalysis depends on residues His330 and Asp353. Asn393, Thr414, Glu442, and Glu447 together coordinate Ca(2+).

This sequence belongs to the transglutaminase superfamily. Transglutaminase family. As to quaternary structure, consists of two polypeptide chains, which are synthesized as a precursor form of a single polypeptide. Requires Ca(2+) as cofactor. In terms of processing, activated by proteolytic processing. In vitro activation is commonly achieved by cleavage with dispase, a neutral bacterial protease. Physiological activation may be catalyzed by CTSL and, to a lesser extent, by CTSS.

It localises to the cytoplasm. The catalysed reaction is L-glutaminyl-[protein] + L-lysyl-[protein] = [protein]-L-lysyl-N(6)-5-L-glutamyl-[protein] + NH4(+). Catalyzes the calcium-dependent formation of isopeptide cross-links between glutamine and lysine residues in various proteins, as well as the conjugation of polyamines to proteins. Involved in the formation of the cornified envelope (CE), a specialized component consisting of covalent cross-links of proteins beneath the plasma membrane of terminally differentiated keratinocytes. Catalyzes small proline-rich proteins and LOR cross-linking to form small interchain oligomers, which are further cross-linked by TGM1 onto the growing CE scaffold. In hair follicles, involved in cross-linking structural proteins to hardening the inner root sheath. The chain is Protein-glutamine gamma-glutamyltransferase E (TGM3) from Bos taurus (Bovine).